We begin with the raw amino-acid sequence, 355 residues long: Peptide chain release factor 1 (355 aa).

The residue at position 233 (glutamine 233) is an N5-methylglutamine.

The protein belongs to the prokaryotic/mitochondrial release factor family. Methylated by PrmC. Methylation increases the termination efficiency of RF1.

It localises to the cytoplasm. Functionally, peptide chain release factor 1 directs the termination of translation in response to the peptide chain termination codons UAG and UAA. This chain is Peptide chain release factor 1, found in Syntrophomonas wolfei subsp. wolfei (strain DSM 2245B / Goettingen).